The primary structure comprises 329 residues: MAKAPMRVAVTGAAGQIGYSLLFRIANGDLLGKDQPVILQLLEIPDEKAQKALTGVMMELEDCAFPLLAGMTAHSDPMTAFKDIDVALLVGARPRGPGMERKDLLSANAQIFTAQGKALNAVAKKTVKVLVVGNPANTNAYIAMKSAPDIPAKNFTAMLRLDHNRALSQLANKLNKPVADIEKLVVWGNHSPTMYPDYRFATIDGKSVKDSINDAAWNKDVFIPTVGKRGAAIIEARGLSSAASAANAAIDHIHDWVLGTNGKWVTMGIPSKGEYGIPAEVIYGFPVTCENGEYKMIEGLEIDEFSRERMTHTLNELLEEQAGVKHLLP.

An NAD(+)-binding site is contributed by 12 to 18; sequence GAAGQIG. Substrate is bound by residues Arg-95 and Arg-101. Residues Asn-108, Gln-115, and 132–134 contribute to the NAD(+) site; that span reads VGN. Residues Asn-134 and Arg-165 each contribute to the substrate site. His-190 functions as the Proton acceptor in the catalytic mechanism.

This sequence belongs to the LDH/MDH superfamily. MDH type 2 family.

It catalyses the reaction (S)-malate + NAD(+) = oxaloacetate + NADH + H(+). Its function is as follows. Catalyzes the reversible oxidation of malate to oxaloacetate. The sequence is that of Malate dehydrogenase from Polynucleobacter asymbioticus (strain DSM 18221 / CIP 109841 / QLW-P1DMWA-1) (Polynucleobacter necessarius subsp. asymbioticus).